The sequence spans 226 residues: 3-dehydroquinate dehydratase (226 aa).

3-dehydroquinate contacts are provided by residues 30–32 and Arg-62; that span reads EWR. The active-site Proton donor/acceptor is the His-118. The active-site Schiff-base intermediate with substrate is the Lys-143. 3-dehydroquinate-binding residues include Arg-186, Ser-205, and Gln-209.

Belongs to the type-I 3-dehydroquinase family. Homodimer.

The catalysed reaction is 3-dehydroquinate = 3-dehydroshikimate + H2O. It functions in the pathway metabolic intermediate biosynthesis; chorismate biosynthesis; chorismate from D-erythrose 4-phosphate and phosphoenolpyruvate: step 3/7. Functionally, involved in the third step of the chorismate pathway, which leads to the biosynthesis of aromatic amino acids. Catalyzes the cis-dehydration of 3-dehydroquinate (DHQ) and introduces the first double bond of the aromatic ring to yield 3-dehydroshikimate. The sequence is that of 3-dehydroquinate dehydratase from Streptococcus equi subsp. zooepidemicus (strain H70).